The following is a 129-amino-acid chain: AGPFRFPRCRKEFQQAQHLRACQQWLHKQAMQSGSGPQPQGPQQRPPLLQQCCNELHQEEPLCVCPTLKGASKAVKQQIRQQGQQQGQQGQQLQHEISRIYQTATHLPRVCNIPRVSICPFQKTMPGPS.

The segment at 28–47 (KQAMQSGSGPQPQGPQQRPP) is disordered. Positions 32–47 (QSGSGPQPQGPQQRPP) are enriched in low complexity.

It belongs to the 2S seed storage albumins family. The mature protein consists of a small and a large chain linked by two disulfide bonds.

Functionally, this is a 2S seed storage protein. The chain is Allergen Bra j 1-E from Brassica juncea (Indian mustard).